Reading from the N-terminus, the 335-residue chain is G-protein coupled receptor 157 (335 aa).

Topologically, residues 1–15 (MQPSPPPTELVPSER) are extracellular. A helical membrane pass occupies residues 16 to 36 (AVVLLSCALSALGSGLLVATH). The Cytoplasmic portion of the chain corresponds to 37 to 48 (ALWPDLRSRARR). The chain crosses the membrane as a helical span at residues 49 to 69 (LLLFLSLADLLSAASYFYGVL). Residues 70 to 87 (QNFAGPSWDCVLQGALST) lie on the Extracellular side of the membrane. Residues 88 to 108 (FANTSSFFWTVAIALYLYLSI) form a helical membrane-spanning segment. Residues 109-119 (VRAARGPRTDR) lie on the Cytoplasmic side of the membrane. Residues 120 to 140 (LLWAFHVVSWGVPLVITVAAV) traverse the membrane as a helical segment. The Extracellular segment spans residues 141 to 166 (ALKKIGYDASDVSVGWCWIDLEAKDH). A helical transmembrane segment spans residues 167 to 187 (VLWMLLTGKLWEMLAYVLLPL). Over 188-226 (LYLLVRKHINRAHTALSEYRPILSQEHRLLRHSSMADKK) the chain is Cytoplasmic. A helical transmembrane segment spans residues 227–247 (LVLIPLIFIGLRVWSTVRFVL). At 248 to 258 (TLCGSPAVQTP) the chain is on the extracellular side. A helical membrane pass occupies residues 259-279 (VLVVLHGIGNTFQGGANCIMF). The Cytoplasmic portion of the chain corresponds to 280-335 (VLCTRAVRTRLFSLCCCCCSSQPPTKSPAGTPKAPAPSKPGESQESQGTPGELPST). The interval 300-335 (SQPPTKSPAGTPKAPAPSKPGESQESQGTPGELPST) is disordered. The span at 320-335 (GESQESQGTPGELPST) shows a compositional bias: polar residues.

Belongs to the G-protein coupled receptor 2 family.

It is found in the cell projection. The protein localises to the cilium membrane. In terms of biological role, orphan receptor that promotes neuronal differentiation of radial glial progenitors (RGPs). The activity of this receptor is mediated by a G(q)-protein that activates a phosphatidylinositol-calcium second messenger. The chain is G-protein coupled receptor 157 (GPR157) from Homo sapiens (Human).